A 240-amino-acid polypeptide reads, in one-letter code: Lactate utilization protein C (240 aa).

Belongs to the LutC/YkgG family.

Its function is as follows. Is involved in L-lactate degradation and allows cells to grow with lactate as the sole carbon source. This chain is Lactate utilization protein C, found in Geobacillus kaustophilus (strain HTA426).